Here is an 873-residue protein sequence, read N- to C-terminus: Protein SEY1 (873 aa).

Over 1–750 (MVANGHFFAG…KRSAIGGITQ (750 aa)) the chain is Cytoplasmic. Residues 50 to 308 (GFNYHLISVF…IPADGFAVYA (259 aa)) form the GB1/RHD3-type G domain. 60–67 (GSQSTGKS) contributes to the GTP binding site. The interval 677 to 701 (LDKWIGHTPSSATPADEEDLTPIGG) is disordered. Residues 691–701 (ADEEDLTPIGG) are compositionally biased toward acidic residues. The helical transmembrane segment at 751-771 (VPLYFYGLLLALGWNEIVAVL) threads the bilayer. At 772–774 (RNP) the chain is on the lumenal side. A helical transmembrane segment spans residues 775 to 795 (AYFLLLFVCAVTAYVTYQLNL). Residues 796-873 (WGPIIKMTEA…IDDADDDDDF (78 aa)) lie on the Cytoplasmic side of the membrane. A disordered region spans residues 841–873 (EGYDMSNMKNRKSAGGYQNNRSHIDDADDDDDF).

It belongs to the TRAFAC class dynamin-like GTPase superfamily. GB1/RHD3 GTPase family. RHD3 subfamily.

It localises to the endoplasmic reticulum membrane. Cooperates with the reticulon proteins and tubule-shaping DP1 family proteins to generate and maintain the structure of the tubular endoplasmic reticulum network. Has GTPase activity, which is required for its function in ER organization. The sequence is that of Protein SEY1 from Paracoccidioides lutzii (strain ATCC MYA-826 / Pb01) (Paracoccidioides brasiliensis).